The sequence spans 369 residues: FAD-dependent monooxygenase FPY4 (369 aa).

It belongs to the aromatic-ring hydroxylase family. It depends on FAD as a cofactor.

It functions in the pathway secondary metabolite biosynthesis. Functionally, FAD-dependent monooxygenase; part of the gene cluster that mediates the biosynthesis of the gamma-pyrones fusapyrone (FPY) and deoxyfusapyrone (dFPY). FPY is an undecaketide and thus likely synthesized by the polyketide synthase FPY1 from acetyl-CoA functioning as starter unit and the addition of 10 malonyl-CoA extender units by successive Claisen-condensations. Next to this, FPY shares some rare features: C-glycosylated 4-deoxyglucose at C-3, a gem-dimethyl group at C-13, and an alpha-beta to beta-gamma double bond shift at C-20. During FPY biosynthesis mono-C-methyl groups are transferred to the tetra-, penta-, hexa- and heptaketide, while two C-methyl groups are transferred to the nonaketide, suggesting that the CMet domain is programmed to selectively catalyze two successive C-alpha-methylation reactions of the nonaketide, while other alpha-carbons are non- or mono-methylated only. While the origin of the 4'-deoxyglucose moiety remains opaque, its transfer to C-3 is most likely mediated by the C-glycosyltransferase FPY2. Next to this, the hydroxyl group present at C-33 and discriminating between FPY and dFPY, is likely to be installed by the cytochrome P450 monooxygenase FPY7. No putative function can be predicted for the remaining genes FPY3-FPY6. The sequence is that of FAD-dependent monooxygenase FPY4 from Fusarium mangiferae (Mango malformation disease fungus).